Reading from the N-terminus, the 250-residue chain is Anamorsin homolog 2 (250 aa).

The segment at 1–102 (MNLKITINQQ…QTKKINIPQQ (102 aa)) is N-terminal SAM-like domain. The tract at residues 102–149 (QDFNNCYGKYDYIEQKFQNQINFFKQVDLKGNQETIDENELLNDGVEV) is linker. The [2Fe-2S] cluster site is built by C155, C162, C165, and C167. Residues 155-167 (CASKPRACANCTC) form a fe-S binding site A region. Residues C193, C196, C204, and C207 each coordinate [4Fe-4S] cluster. 2 short sequence motifs (cx2C motif) span residues 193–196 (CGSC) and 204–207 (CANC). The segment at 193–207 (CGSCYLGDAFRCANC) is fe-S binding site B.

Belongs to the anamorsin family. In terms of assembly, monomer. It depends on [2Fe-2S] cluster as a cofactor. The cofactor is [4Fe-4S] cluster.

It is found in the cytoplasm. The protein resides in the mitochondrion intermembrane space. Functionally, component of the cytosolic iron-sulfur (Fe-S) protein assembly (CIA) machinery. Required for the maturation of extramitochondrial Fe-S proteins. Part of an electron transfer chain functioning in an early step of cytosolic Fe-S biogenesis, facilitating the de novo assembly of a [4Fe-4S] cluster on the cytosolic Fe-S scaffold complex. Electrons are transferred from NADPH via a FAD- and FMN-containing diflavin oxidoreductase. Together with the diflavin oxidoreductase, also required for the assembly of the diferric tyrosyl radical cofactor of ribonucleotide reductase (RNR), probably by providing electrons for reduction during radical cofactor maturation in the catalytic small subunit. This is Anamorsin homolog 2 from Paramecium tetraurelia.